We begin with the raw amino-acid sequence, 351 residues long: N-terminal EF-hand calcium-binding protein 1 (351 aa).

Ser4 bears the Phosphoserine mark. 2 EF-hand domains span residues 26 to 61 and 60 to 95; these read KGMSIFLDILRRADKNDDGKLSFEEFKAYFADGVLS and LSGEELHELFHTIDTHNTNNLDTEELCEYFSQHLGE. 5 residues coordinate Ca(2+): Asp39, Asn41, Asp43, Lys45, and Glu50. The stretch at 135 to 163 forms a coiled coil; the sequence is LLKETLNQLQSLQNSLECAMETTEEQTRQ. The segment at 180 to 203 is disordered; sequence GKRSSRRVQRHNSFSPNSPQFNVS. A compositionally biased stretch (polar residues) spans 190–202; it reads HNSFSPNSPQFNV. A phosphoserine mark is found at Ser192 and Ser197. The stretch at 209 to 275 forms a coiled coil; the sequence is EEDNQWMTQI…EEFQLALKHY (67 aa). Positions 252 to 340 constitute an ABM domain; that stretch reads MLVQRQMSVI…LETPELTSTM (89 aa).

Interacts with STX1. May interact with CPNE6. Expressed in brain (at protein level).

Its subcellular location is the cytoplasm. The chain is N-terminal EF-hand calcium-binding protein 1 (NECAB1) from Homo sapiens (Human).